A 602-amino-acid polypeptide reads, in one-letter code: Rho family-interacting cell polarization regulator 2 (602 aa).

The segment at 46 to 73 (KKPQAKVKKMHNLGHKNSTTPKEPQPKR) is disordered. Over residues 48 to 59 (PQAKVKKMHNLG) the composition is skewed to basic residues. A coiled-coil region spans residues 83–112 (NGLDEYLEVHQTELDKLTAQLKDMRRNSRL). Residues 173-421 (RESLTEINRS…TTAATQHRAL (249 aa)) form a necessary for interaction with NCAM and myoblast protrusion formation region. The disordered stretch occupies residues 384-474 (GDLPYEDRVP…RSEVCQKPSN (91 aa)). Positions 403-416 (AHVSSSPDITTAAT) are enriched in polar residues. A compositionally biased stretch (low complexity) spans 423 to 437 (SSESSSPDCSSSDSC).

It belongs to the RIPOR family. In terms of assembly, homooligomer; homooligomerization is regulated by RHOC and leads to the formation of concatemers through the association of N- and C-termini. Interacts with NCAM.

It is found in the cytoplasm. The protein resides in the cytoskeleton. The protein localises to the cell projection. It localises to the filopodium. Its subcellular location is the apical cell membrane. It is found in the stereocilium. The protein resides in the stereocilium membrane. In terms of biological role, acts as an inhibitor of the small GTPase RHOA and plays several roles in the regulation of myoblast and hair cell differentiation, lymphocyte T proliferation and neutrophil polarization. Plays a role in fetal mononuclear myoblast differentiation by promoting filopodia and myotube formation. Maintains naive T lymphocytes in a quiescent state and prevents chemokine-induced T lymphocyte responses, such as cell adhesion, polarization and migration. Involved also in the regulation of neutrophil polarization, chemotaxis and adhesion. Required for normal development of inner and outer hair cell stereocilia within the cochlea of the inner ear. Plays a role for maintaining the structural organization of the basal domain of stereocilia. Involved in mechanosensory hair cell function. Required for normal hearing. This is Rho family-interacting cell polarization regulator 2 from Gallus gallus (Chicken).